We begin with the raw amino-acid sequence, 277 residues long: Cell wall protein PGA30 (277 aa).

The first 18 residues, 1-18, serve as a signal peptide directing secretion; the sequence is MKYFTIATVLTLASSALA. 2 N-linked (GlcNAc...) asparagine glycosylation sites follow: Asn129 and Asn178. Residues 219-246 are disordered; sequence VLPSSSTEAPPKTSVAAPSTTAEAQTTA. Residues 234-246 show a composition bias toward polar residues; it reads AAPSTTAEAQTTA. Residue Gly253 is the site of GPI-anchor amidated glycine attachment. The propeptide at 254-277 is removed in mature form; that stretch reads GANEIVGGGSMAIALAAAAIGLVI.

Belongs to the SRP1/TIP1 family. In terms of processing, the GPI-anchor is attached to the protein in the endoplasmic reticulum and serves to target the protein to the cell surface. There, the glucosamine-inositol phospholipid moiety is cleaved off and the GPI-modified mannoprotein is covalently attached via its lipidless GPI glycan remnant to the 1,6-beta-glucan of the outer cell wall layer.

Its subcellular location is the secreted. The protein localises to the cell wall. It localises to the membrane. In terms of biological role, component of the cell wall involved in virulence which plays a role in the relationship between C.albicans and the host. This chain is Cell wall protein PGA30 (PGA30), found in Candida albicans (strain SC5314 / ATCC MYA-2876) (Yeast).